The sequence spans 171 residues: Lipoprotein signal peptidase (171 aa).

2 helical membrane-spanning segments follow: residues 67-87 (YALL…LWRS) and 88-108 (TSKL…GNAY). Catalysis depends on residues Asp118 and Asp136. A helical membrane pass occupies residues 127 to 147 (FSWYVFNLADAAIVAGVALLL).

It belongs to the peptidase A8 family.

It localises to the cell inner membrane. It catalyses the reaction Release of signal peptides from bacterial membrane prolipoproteins. Hydrolyzes -Xaa-Yaa-Zaa-|-(S,diacylglyceryl)Cys-, in which Xaa is hydrophobic (preferably Leu), and Yaa (Ala or Ser) and Zaa (Gly or Ala) have small, neutral side chains.. Its pathway is protein modification; lipoprotein biosynthesis (signal peptide cleavage). This protein specifically catalyzes the removal of signal peptides from prolipoproteins. The sequence is that of Lipoprotein signal peptidase from Methylocella silvestris (strain DSM 15510 / CIP 108128 / LMG 27833 / NCIMB 13906 / BL2).